The primary structure comprises 450 residues: Putative gustatory receptor 28a (450 aa).

The Cytoplasmic portion of the chain corresponds to 1-47; it reads MAFKLWERFSQADNVFQALRPLTFISLLGLAPFRLNLNPRKEVQTSK. The helical transmembrane segment at 48–68 threads the bilayer; the sequence is FSFFAGIVHFLFFVLCFGISV. The Extracellular portion of the chain corresponds to 69–87; the sequence is KEGDSIIGYFFQTNITRFS. An N-linked (GlcNAc...) asparagine glycan is attached at N82. The helical transmembrane segment at 88–108 threads the bilayer; it reads DGTLRLTGILAMSTIFGFAMF. Residues 109–138 lie on the Cytoplasmic side of the membrane; the sequence is KRQRLVSIIQNNIVVDEIFVRLGMKLDYRR. A helical transmembrane segment spans residues 139–159; sequence ILLSSFLISLGMLLFNVIYLC. The Extracellular segment spans residues 160–171; sequence VSYSLLVSATIS. A helical membrane pass occupies residues 172-192; the sequence is PSFVTFTTFALPHINISLMVF. At 193 to 292 the chain is on the cytoplasmic side; that stretch reads KFLCTTDLAR…CQTIEEYFTY (100 aa). A helical transmembrane segment spans residues 293-313; sequence PLLGIIAISFLFILFDDFYIL. Residues 314–329 are Extracellular-facing; that stretch reads EAILNPKRLDVFEADE. A helical transmembrane segment spans residues 330-350; it reads FFAFFLMQLIWYIVIIVLIVE. Topologically, residues 351–407 are cytoplasmic; that stretch reads GSSRTILHSSYTAAIVHKILNITDDPELRDRLFRLSLQLSHRKVLFTAAGLFRLDRT. The chain crosses the membrane as a helical span at residues 408–424; the sequence is LIFTITGAATCYLIILI. The Extracellular segment spans residues 425–450; it reads QFRFTHHMDDTSSNSTNNLHSIHLGD. N438 carries N-linked (GlcNAc...) asparagine glycosylation.

This sequence belongs to the insect chemoreceptor superfamily. Gustatory receptor (GR) family. Gr2a subfamily. In addition to expression in a large number of taste neurons, Gr28a is also expressed in a few nonchemosensory neurons, including the campaniform sensilla of the wing, leg stretch receptors, and multiple dendritic (MD) neurons in the abdomen. In larvea, is expressed in neurons of the terminal external chemosensory organ, the dorsal external chemosensory organ, as well as in the ventral and posterior pharyngeal sense organ.

The protein resides in the cell membrane. Functionally, probable gustatory receptor which mediates acceptance or avoidance behavior, depending on its substrates. Atypical expression also suggests nongustatory roles in the nervous system and tissues involved in proprioception, hygroreception, and other sensory modalities. It is also possible that it has chemosensory roles in the detection of internal ligands. In Drosophila melanogaster (Fruit fly), this protein is Putative gustatory receptor 28a (Gr28a).